The sequence spans 190 residues: Glutathione peroxidase 2 (190 aa).

Residue selenocysteine 40 is part of the active site. Position 40 (selenocysteine 40) is a non-standard amino acid, selenocysteine.

This sequence belongs to the glutathione peroxidase family. In terms of assembly, homotetramer.

Its subcellular location is the cytoplasm. It localises to the cytosol. The enzyme catalyses 2 glutathione + H2O2 = glutathione disulfide + 2 H2O. The catalysed reaction is a hydroperoxy polyunsaturated fatty acid + 2 glutathione = a hydroxy polyunsaturated fatty acid + glutathione disulfide + H2O. It carries out the reaction tert-butyl hydroperoxide + 2 glutathione = tert-butanol + glutathione disulfide + H2O. It catalyses the reaction cumene hydroperoxide + 2 glutathione = 2-phenylpropan-2-ol + glutathione disulfide + H2O. The enzyme catalyses (13S)-hydroperoxy-(9Z,11E)-octadecadienoate + 2 glutathione = (13S)-hydroxy-(9Z,11E)-octadecadienoate + glutathione disulfide + H2O. The catalysed reaction is (5S)-hydroperoxy-(6E,8Z,11Z,14Z)-eicosatetraenoate + 2 glutathione = (5S)-hydroxy-(6E,8Z,11Z,14Z)-eicosatetraenoate + glutathione disulfide + H2O. It carries out the reaction (12R)-hydroperoxy-(5Z,8Z,10E,14Z)-eicosatetraenoate + 2 glutathione = (12R)-hydroxy-(5Z,8Z,10E,14Z)-eicosatetraenoate + glutathione disulfide + H2O. It catalyses the reaction (15S)-hydroperoxy-(5Z,8Z,11Z,13E)-eicosatetraenoate + 2 glutathione = (15S)-hydroxy-(5Z,8Z,11Z,13E)-eicosatetraenoate + glutathione disulfide + H2O. Its function is as follows. Catalyzes the reduction of hydroperoxides in a glutathione-dependent manner thus regulating cellular redox homeostasis. Can reduce small soluble hydroperoxides such as H2O2, cumene hydroperoxide and tert-butyl hydroperoxide, as well as several fatty acid-derived hydroperoxides. Cannot reduce phosphatidycholine hydroperoxide. The polypeptide is Glutathione peroxidase 2 (GPX2) (Sapajus apella (Brown-capped capuchin)).